An 85-amino-acid chain; its full sequence is U4-theraphotoxin-Hhn1a (85 aa).

A signal peptide spans 1–22 (MKVTLIAILTCAAVLVLHTTAA). The propeptide occupies 23–48 (EEFEAESQLMEVGMPDTELAAVDEER). 3 disulfide bridges follow: C52–C66, C56–C77, and C71–C82.

This sequence belongs to the neurotoxin 12 (Hwtx-2) family. 02 (Hwtx-2) subfamily. As to quaternary structure, monomer. Expressed by the venom gland.

The protein localises to the secreted. Its function is as follows. Neurotoxin active on both insects and mammals. The chain is U4-theraphotoxin-Hhn1a from Cyriopagopus hainanus (Chinese bird spider).